The following is a 372-amino-acid chain: GTPase Obg (372 aa).

The region spanning 1–159 is the Obg domain; sequence MAFVDEAKFF…KWLLIELKLM (159 aa). Positions 121–141 are disordered; that stretch reads GSGGMGNPHFSSGSNRTPRVA. Residues 160–329 form the OBG-type G domain; sequence ADVGLVGLPN…LVKLIGDIID (170 aa). Residues 166-173, 191-195, 213-216, 280-283, and 310-312 contribute to the GTP site; these read GLPNAGKS, FTTLE, DIPG, NKCD, and SAI. Mg(2+)-binding residues include Ser173 and Thr193. Residues 346 to 372 are disordered; that stretch reads QDLKKQKEEERRQELKKQKEEEQAKDE.

Belongs to the TRAFAC class OBG-HflX-like GTPase superfamily. OBG GTPase family. Monomer. Mg(2+) is required as a cofactor.

It localises to the cytoplasm. An essential GTPase which binds GTP, GDP and possibly (p)ppGpp with moderate affinity, with high nucleotide exchange rates and a fairly low GTP hydrolysis rate. Plays a role in control of the cell cycle, stress response, ribosome biogenesis and in those bacteria that undergo differentiation, in morphogenesis control. The polypeptide is GTPase Obg (Desulfotalea psychrophila (strain LSv54 / DSM 12343)).